The primary structure comprises 341 residues: MLFNPTGLTECLQEWEDLEKDYQQIQDTHRHYKHKLEEVSKLQESCSSSIARQRKKLKDLSESLEECKGAVNPEDVNKIDDIQESIKERPNVFFEMEAFLPKKNGLYLSLVLGNVNVTLLNKQSKFAYKDEYEKFKLYLTVLLLFFSFTCRFLVSYRVVDALFNFLLVWYYCTLTIRESILINNGSKIKGWWVFQHYVSTFLSGVMLTWPDGELYQMFRNQFLSYSMYINFVQFFQYYYQSGCLYRLRALGERHNMDLTVEGFQSWMWRGLTFLLPFLFLGHFFQLYNGITLFQMTQLPEWKEWQVLMCGSTFLVLFMGNFFTTLGVVYHKYMDQDKAKGL.

Residues 1–131 (MLFNPTGLTE…KQSKFAYKDE (131 aa)) lie on the Cytoplasmic side of the membrane. K129 is a binding site for CoA. A helical transmembrane segment spans residues 132-151 (YEKFKLYLTVLLLFFSFTCR). The Extracellular segment spans residues 152 to 157 (FLVSYR). A helical transmembrane segment spans residues 158–176 (VVDALFNFLLVWYYCTLTI). At 177-189 (RESILINNGSKIK) the chain is on the cytoplasmic side. S186 and K187 together coordinate CoA. Residues 190 to 208 (GWWVFQHYVSTFLSGVMLT) traverse the membrane as a helical segment. Residues 209-217 (WPDGELYQM) lie on the Extracellular side of the membrane. The helical transmembrane segment at 218–239 (FRNQFLSYSMYINFVQFFQYYY) threads the bilayer. Q236, Y239, Q240, and H282 together coordinate CoA. Topologically, residues 240–269 (QSGCLYRLRALGERHNMDLTVEGFQSWMWR) are cytoplasmic. The helical transmembrane segment at 270–293 (GLTFLLPFLFLGHFFQLYNGITLF) threads the bilayer. Residues 294–303 (QMTQLPEWKE) lie on the Extracellular side of the membrane. A helical membrane pass occupies residues 304–329 (WQVLMCGSTFLVLFMGNFFTTLGVVY). Residues 330 to 341 (HKYMDQDKAKGL) lie on the Cytoplasmic side of the membrane. Position 331 (K331) interacts with CoA.

The protein belongs to the TMEM120 family. In terms of assembly, homodimer.

It localises to the cell membrane. The protein resides in the nucleus inner membrane. The protein localises to the endoplasmic reticulum. In terms of biological role, multifunctional protein involved in mechanosensation, and plays an essential role in lipid metabolism. May function as a potential ion channel involved in sensing mechanical stimuli. TMEM120A is structurally similar to a lipid-modifying enzyme, ELOVL7, and contains a bound coenzyme A molecule, which suggests it might function as an enzyme in lipid metabolism. In Danio rerio (Zebrafish), this protein is Transmembrane protein 120A-A (tmem120aa).